The following is a 145-amino-acid chain: Cell division protein SepF (145 aa).

Belongs to the SepF family. As to quaternary structure, homodimer. Interacts with FtsZ.

The protein localises to the cytoplasm. In terms of biological role, cell division protein that is part of the divisome complex and is recruited early to the Z-ring. Probably stimulates Z-ring formation, perhaps through the cross-linking of FtsZ protofilaments. Its function overlaps with FtsA. The protein is Cell division protein SepF of Lactobacillus acidophilus (strain ATCC 700396 / NCK56 / N2 / NCFM).